The following is a 212-amino-acid chain: Soluble inorganic pyrophosphatase 1 (212 aa).

2 residues coordinate substrate: lysine 62 and arginine 76. Residue tyrosine 84 is the Proton donor of the active site. Tyrosine 88 is a binding site for substrate. Residues aspartate 98, aspartate 103, and aspartate 135 each coordinate Mg(2+). Tyrosine 172 contributes to the substrate binding site.

Belongs to the PPase family. As to quaternary structure, monomer. The cofactor is Mg(2+). As to expression, ubiquitous. Lower level of expression in ovary, stigma and pollen.

The protein resides in the cytoplasm. It catalyses the reaction diphosphate + H2O = 2 phosphate + H(+). Inhibited by Zn(2+), Ca(2+), Ba(2+), Fe(2+), Co(2+), Cu(2+), Eu(2+), Eu(3+) and Mn(2+). Catalyzes the irreversible hydrolysis of pyrophosphate (PPi) to phosphate. The MgPPi(2-) complex binds to the enzyme only after a free Mg(2+) ion has bound. No activity with glycerol-3-phosphate, glucose-6-phosphate, p-nitrophenylphosphate, ADP, NADP(+), NAD(+),NADH, NADPH or phosphoribosyl pyrophosphate as substrates. Controls the equilibrium of gluconeogenic reactions in the heterotrophic growth phase of early seedling establishment. Determinates the rate of cytosolic glycolysis, providing carbon for seed storage lipid accumulation. This chain is Soluble inorganic pyrophosphatase 1, found in Arabidopsis thaliana (Mouse-ear cress).